Here is a 353-residue protein sequence, read N- to C-terminus: NADH-ubiquinone oxidoreductase chain 2 (353 aa).

Helical transmembrane passes span 4–24 (SVVLILLLNIIVSVVIVLSSH), 60–80 (FLVQAFSAAMILNVALVQLWL), 96–116 (IVLTLALCLKLGLFPCHFWFP), 139–159 (FIILVSVCNIISINVLTTLGC), 198–218 (IYVGCIMFVVYIVLSSTVFLI), 241–261 (GNVLVLVILSLGGLPPLTGFL), 274–294 (NLLVPCAILIVGSLLSLFFYL), and 330–350 (VLLSILSSMSILGLLLVPALW).

It belongs to the complex I subunit 2 family.

Its subcellular location is the mitochondrion inner membrane. The catalysed reaction is a ubiquinone + NADH + 5 H(+)(in) = a ubiquinol + NAD(+) + 4 H(+)(out). Its function is as follows. Core subunit of the mitochondrial membrane respiratory chain NADH dehydrogenase (Complex I) that is believed to belong to the minimal assembly required for catalysis. Complex I functions in the transfer of electrons from NADH to the respiratory chain. The immediate electron acceptor for the enzyme is believed to be ubiquinone. The polypeptide is NADH-ubiquinone oxidoreductase chain 2 (ND2) (Pisaster ochraceus (Ochre sea star)).